The primary structure comprises 483 residues: Glutamate--tRNA ligase (483 aa).

The short motif at 11 to 21 is the 'HIGH' region element; that stretch reads PSPTGLLHIGN. Positions 255-259 match the 'KMSKS' region motif; the sequence is KLSKR. Residue lysine 258 coordinates ATP.

This sequence belongs to the class-I aminoacyl-tRNA synthetase family. Glutamate--tRNA ligase type 1 subfamily. As to quaternary structure, monomer.

It localises to the cytoplasm. It carries out the reaction tRNA(Glu) + L-glutamate + ATP = L-glutamyl-tRNA(Glu) + AMP + diphosphate. Its function is as follows. Catalyzes the attachment of glutamate to tRNA(Glu) in a two-step reaction: glutamate is first activated by ATP to form Glu-AMP and then transferred to the acceptor end of tRNA(Glu). The protein is Glutamate--tRNA ligase of Lactococcus lactis subsp. cremoris (strain MG1363).